The primary structure comprises 193 residues: MAQSDITIDALSKVGQQDAEYLVSLVRSVPGFPKEGIIFRDFMPVLADPKGLKILLKALEEALPVSPSEFDSIAGLESRGFLFGPVMAAHLGKGFIAVRKAGKLPPETIGESYDLEYGTASVEIETDAVQAGKRVLIVDDLIATGGTAKAATDLIEKAGGTVVGFSFVMRLDGLDGLDKLDGKPSSSLIAMPA.

This sequence belongs to the purine/pyrimidine phosphoribosyltransferase family. As to quaternary structure, homodimer.

Its subcellular location is the cytoplasm. The enzyme catalyses AMP + diphosphate = 5-phospho-alpha-D-ribose 1-diphosphate + adenine. It functions in the pathway purine metabolism; AMP biosynthesis via salvage pathway; AMP from adenine: step 1/1. Its function is as follows. Catalyzes a salvage reaction resulting in the formation of AMP, that is energically less costly than de novo synthesis. The protein is Adenine phosphoribosyltransferase of Bifidobacterium longum (strain NCC 2705).